A 310-amino-acid chain; its full sequence is Malate dehydrogenase (310 aa).

Residues 7–13 (GAAGGIG) and Asp34 each bind NAD(+). Residues Arg81 and Arg87 each contribute to the substrate site. Residues Asn94 and 117 to 119 (ITN) contribute to the NAD(+) site. Substrate is bound by residues Asn119 and Arg153. His177 serves as the catalytic Proton acceptor. Met227 lines the NAD(+) pocket.

Belongs to the LDH/MDH superfamily. MDH type 1 family. As to quaternary structure, homodimer.

It catalyses the reaction (S)-malate + NAD(+) = oxaloacetate + NADH + H(+). Its function is as follows. Catalyzes the reversible oxidation of malate to oxaloacetate. In Idiomarina loihiensis (strain ATCC BAA-735 / DSM 15497 / L2-TR), this protein is Malate dehydrogenase.